A 458-amino-acid chain; its full sequence is Histone acetyltransferase KAT8 (458 aa).

The span at 1 to 14 (MAAQGATAAVAATT) shows a compositional bias: low complexity. A disordered region spans residues 1–52 (MAAQGATAAVAATTSGIVGEGEPGPGENTSVEGPARSPGRVSPPTPARGEPE). Position 2 is an N-acetylalanine (Ala2). Residues Ser37 and Ser42 each carry the phosphoserine modification. The Tudor-knot domain maps to 55–110 (VEIGETYLCRRPDSTWHSAEVIQSRVNDQEGREEFYVHYVGFNRRLDEWVDKNRLA). Lys113 bears the N6-acetyllysine mark. Positions 140–149 (RNQKRKHDEI) match the Nuclear localization signal motif. The MYST-type HAT domain occupies 174 to 447 (TKVKYVDKIH…VDSVCLKWAP (274 aa)). The interval 174 to 458 (TKVKYVDKIH…KHKQVKLSKK (285 aa)) is sufficient for interaction with KANSL1. A C2HC MYST-type zinc finger spans residues 207–232 (LWLCEYCLKYMKFEKSYRFHLGQCQW). Residues Cys210, Cys213, His226, and Cys230 each contribute to the Zn(2+) site. Residue Lys274 is modified to N6-acetyllysine; by autocatalysis. The acetyl-CoA site is built by Ile317, Thr319, Arg325, Arg326, Gly327, Gly329, and Lys330. Residue Ser348 is modified to Phosphoserine. Residue Glu350 is the Proton donor/acceptor of the active site. The acetyl-CoA site is built by Ser354, Ser363, Tyr408, and Lys432.

It belongs to the MYST (SAS/MOZ) family. As to quaternary structure, component of a multisubunit histone acetyltransferase complex (MSL) at least composed of the MOF/KAT8, MSL1/hampin, MSL2L1 and MSL3L1. Component of the NSL complex at least composed of MOF/KAT8, KANSL1, KANSL2, KANSL3, MCRS1, PHF20, OGT1/OGT, WDR5 and HCFC1. Component of some MLL1/MLL complex, at least composed of the core components KMT2A/MLL1, ASH2L, HCFC1, WDR5 and RBBP5, as well as the facultative components BACC1, CHD8, E2F6, HSP70, INO80C, KANSL1, LAS1L, MAX, MCRS1, MGA, MOF/KAT8, PELP1, PHF20, PRP31, RING2, RUVB1/TIP49A, RUVB2/TIP49B, SENP3, TAF1, TAF4, TAF6, TAF7, TAF9 and TEX10. Interacts with the chromodomain of MORF4L1/MRG15. Interacts with ATM (via its Tudor-knot domain); possibly regulating the activity of ATM. Interacts with NELFD. In terms of processing, acetylation at Lys-274 facilitates cognate substrate Lys-binding and acetylation. Although considered as an autoacetylation event, acetylation at Lys-274 probably takes place via a non-enzymatic process following acetyl-CoA-binding, which primes KAT8 for cognate protein-lysine acetylation. Deacetylated by SIRT1.

The protein resides in the nucleus. The protein localises to the chromosome. It localises to the mitochondrion. The enzyme catalyses L-lysyl-[histone] + acetyl-CoA = N(6)-acetyl-L-lysyl-[histone] + CoA + H(+). The catalysed reaction is L-lysyl-[protein] + acetyl-CoA = N(6)-acetyl-L-lysyl-[protein] + CoA + H(+). It catalyses the reaction propanoyl-CoA + L-lysyl-[protein] = N(6)-propanoyl-L-lysyl-[protein] + CoA + H(+). The acetyltransferase activity is inhibited by anacardic acid derivatives. Its function is as follows. Histone acetyltransferase that catalyzes histone H4 acetylation at 'Lys-5'- and 'Lys-8' (H4K5ac and H4K8ac) or 'Lys-16' (H4K16ac), depending on the context. Catalytic component of the MSL histone acetyltransferase complex, a multiprotein complex that mediates the majority of histone H4 acetylation at 'Lys-16' (H4K16ac), an epigenetic mark that prevents chromatin compaction. H4K16ac constitutes the only acetylation mark intergenerationally transmitted and regulates key biological processes, such as oogenesis, embryonic stem cell pluripotency, hematopoiesis or glucose metabolism. The MSL complex is required for chromosome stability and genome integrity by maintaining homeostatic levels of H4K16ac. The MSL complex is also involved in gene dosage by promoting up-regulation of genes expressed by the X chromosome. X up-regulation is required to compensate for autosomal biallelic expression. The MSL complex also participates in gene dosage compensation by promoting expression of Tsix non-coding RNA. As part of the NSL histone acetyltransferase complex, catalyzes histone H4 acetylation at 'Lys-5'- and 'Lys-8' (H4K5ac and H4K8ac) at transcription start sites and promotes transcription initiation. The NSL complex also acts as a regulator of gene expression in mitochondria: KAT8 associates with mitochondrial DNA and controls expression of respiratory genes in an acetyltransferase-dependent mechanism. Also functions as an acetyltransferase for non-histone targets, such as ALKBH5, COX17, IRF3, KDM1A/LSD1, LMNA, PAX7 or TP53/p53. Acts as an inhibitor of antiviral immunity by acetylating IRF3, preventing IRF3 recruitment to promoters. Acts as a regulator of asymmetric division in muscle stem cells by mediating acetylation of PAX7. As part of the NSL complex, acetylates TP53/p53 at 'Lys-120'. Acts as a regulator of epithelial-to-mesenchymal transition as part of the NSL complex by mediating acetylation of KDM1A/LSD1. The NSL complex is required for nuclear architecture maintenance by mediating acetylation of LMNA. Promotes mitochondrial integrity by catalyzing acetylation of COX17. In addition to protein acetyltransferase activity, able to mediate protein propionylation. The protein is Histone acetyltransferase KAT8 (Kat8) of Rattus norvegicus (Rat).